The chain runs to 267 residues: MSSAPLVGYSSSGSEDEAEAVAAGRSKPGTGFHRCGQNPVPSEKLPVPDSVLSMFPSTEEGPEDDSAKHGGRIRTFPHERGNWATHIYIPYEAKEDFRDLLDALLPRAQMFVPRLVLMEEFHVSLSQSVVLRHHWILPFVQVLKDRMASFQRFFFTANRVKIYTNQEKTRTFIGLEVSSGHAQFLDLVSEVDRAMKEFDLTTFYQDPSFHISLAWCVGDASLQLEGQCLQELQEIVDEFEDSEMLLRVLANQVRCKSGNKFFSMPLK.

Residues 1-13 (MSSAPLVGYSSSG) show a composition bias toward polar residues. The tract at residues 1 to 74 (MSSAPLVGYS…DSAKHGGRIR (74 aa)) is disordered. Histidine 122 (proton acceptor) is an active-site residue. 122–124 (HVS) contributes to the AMP binding site. UMP is bound by residues glutamine 166, tyrosine 204, and 208 to 212 (SFHIS). AMP-binding positions include tyrosine 204 and 206–212 (DPSFHIS). Histidine 210 (proton donor) is an active-site residue.

It belongs to the 2H phosphoesterase superfamily. USB1 family. As to quaternary structure, interacts with PLRG1, CDC5L and PRPF19.

The protein localises to the nucleus. The catalysed reaction is a 3'-end uridylyl-uridine-RNA = a 3'-end 2',3'-cyclophospho-uridine-RNA + uridine. The enzyme catalyses a 3'-end uridylyl-adenosine-RNA = a 3'-end 2',3'-cyclophospho-uridine-RNA + adenosine. In terms of biological role, 3'-5' RNA exonuclease that trims the 3' end of oligo(U) and oligo(A) tracts of the pre-U6 small nuclear RNA (snRNA) molecule, leading to the formation of a mature U6 snRNA 3' end-terminated with a 2',3'-cyclic phosphate. Participates in the U6 snRNA 3' end processing that prevents U6 snRNA degradation. In addition also removes uridines from the 3' end of U6atac snRNA and possibly the vault RNA VTRNA1-1. This is U6 snRNA phosphodiesterase 1 from Mus musculus (Mouse).